Here is a 320-residue protein sequence, read N- to C-terminus: Mitochondrial ribosome-associated GTPase 1 (320 aa).

The region spanning 37 to 209 (LKQMRASPRK…LLDTPGVLPP (173 aa)) is the CP-type G domain. Residues 81–84 (NKMD), 153–158 (NVGKSS), and Gly-205 contribute to the GTP site.

This sequence belongs to the TRAFAC class YlqF/YawG GTPase family. MTG1 subfamily.

The protein resides in the mitochondrion inner membrane. Functionally, plays a role in the regulation of the mitochondrial ribosome assembly and of translational activity. Displays mitochondrial GTPase activity. This is Mitochondrial ribosome-associated GTPase 1 from Ictalurus punctatus (Channel catfish).